Reading from the N-terminus, the 278-residue chain is Poly(3-hydroxyoctanoate) depolymerase (278 aa).

Residues 1 to 33 form the signal peptide; sequence MPLRTLLCGLLLAVCLGQHALAASRCSERPRTL.

It is found in the secreted. It carries out the reaction Hydrolyzes the polyester poly{oxycarbonyl[(R)-2-pentylethylene]} to oligomers.. Hydrolysis of poly(3-hydroxyoctanoic acid). This is Poly(3-hydroxyoctanoate) depolymerase (phaZ) from Pseudomonas fluorescens.